Here is a 26-residue protein sequence, read N- to C-terminus: AMP deaminase 1 (26 aa).

Belongs to the metallo-dependent hydrolases superfamily. Adenosine and AMP deaminases family. In terms of assembly, homotetramer. It depends on Zn(2+) as a cofactor.

It catalyses the reaction AMP + H2O + H(+) = IMP + NH4(+). Its pathway is purine metabolism; IMP biosynthesis via salvage pathway; IMP from AMP: step 1/1. In terms of biological role, AMP deaminase plays a critical role in energy metabolism. The sequence is that of AMP deaminase 1 (AMPD1) from Oryctolagus cuniculus (Rabbit).